The following is a 213-amino-acid chain: Thymidylate kinase (213 aa).

Gly-11–Thr-18 is a binding site for ATP.

This sequence belongs to the thymidylate kinase family.

The catalysed reaction is dTMP + ATP = dTDP + ADP. Its function is as follows. Phosphorylation of dTMP to form dTDP in both de novo and salvage pathways of dTTP synthesis. The sequence is that of Thymidylate kinase from Oenococcus oeni (strain ATCC BAA-331 / PSU-1).